The following is a 263-amino-acid chain: MGLKSFGVLGNPIKHSKSPLIHNACFLTFQKELGFLGHYHPILLPLESHIKNEFLNLGLSGANVTLPFKERAFQVCDKIKGIALECGAVNTLVLENDELVGYNTDALGFYLSLKQKNYQSALILGSGGSAKALACELKKRGLKVSVLNRSTKGLDFFQNLGCACFTTTPKGAFDLIINATSASLNNELPLDKEVLKGYFKESRLAYDLAYGFLTPFLSLAKELKLPFQDGKGMLIYQASLSFEKFSSSQISYSKAFEIMRSVF.

Shikimate-binding positions include 16 to 18 (SKS) and Thr65. Lys69 serves as the catalytic Proton acceptor. The shikimate site is built by Asn90 and Asp105. NADP(+) contacts are provided by residues 125 to 129 (GSGGS) and Leu208. Tyr210 is a binding site for shikimate. Gly230 contributes to the NADP(+) binding site.

It belongs to the shikimate dehydrogenase family. As to quaternary structure, homodimer.

The enzyme catalyses shikimate + NADP(+) = 3-dehydroshikimate + NADPH + H(+). The protein operates within metabolic intermediate biosynthesis; chorismate biosynthesis; chorismate from D-erythrose 4-phosphate and phosphoenolpyruvate: step 4/7. Involved in the biosynthesis of the chorismate, which leads to the biosynthesis of aromatic amino acids. Catalyzes the reversible NADPH linked reduction of 3-dehydroshikimate (DHSA) to yield shikimate (SA). The polypeptide is Shikimate dehydrogenase (NADP(+)) (Helicobacter acinonychis (strain Sheeba)).